Consider the following 202-residue polypeptide: B-cell CLL/lymphoma 7 protein family member B (202 aa).

The segment at 53–202 (DSKEKEKSKS…PAVPQTASES (150 aa)) is disordered. Over residues 90 to 99 (ENSNQSSVSD) the composition is skewed to polar residues. Residues 107-123 (SSTNSSPSPQQSESLSP) are compositionally biased toward low complexity. 7 positions are modified to phosphoserine: serine 114, serine 118, serine 120, serine 122, serine 127, serine 148, and serine 152.

The protein belongs to the BCL7 family.

Functionally, positive regulator of apoptosis. Plays a role in the Wnt signaling pathway, negatively regulating the expression of Wnt signaling components CTNNB1 and HMGA1. Involved in cell cycle progression, maintenance of the nuclear structure and stem cell differentiation. May play a role in lung tumor development or progression. In Bos taurus (Bovine), this protein is B-cell CLL/lymphoma 7 protein family member B (BCL7B).